We begin with the raw amino-acid sequence, 106 residues long: Small ribosomal subunit protein uS10 (106 aa).

It belongs to the universal ribosomal protein uS10 family. In terms of assembly, part of the 30S ribosomal subunit.

Functionally, involved in the binding of tRNA to the ribosomes. The chain is Small ribosomal subunit protein uS10 from Solibacter usitatus (strain Ellin6076).